Reading from the N-terminus, the 150-residue chain is Large ribosomal subunit protein uL15 (150 aa).

The segment at 1–55 (MADNEILQMHDLKPAPGAKKDRTRVGRGEGSKGKTSGRGAKGQTKRNHVRPGFEG) is disordered. Basic and acidic residues predominate over residues 8-32 (QMHDLKPAPGAKKDRTRVGRGEGSK).

This sequence belongs to the universal ribosomal protein uL15 family. Part of the 50S ribosomal subunit.

Functionally, binds to the 23S rRNA. The chain is Large ribosomal subunit protein uL15 from Bifidobacterium longum (strain NCC 2705).